The chain runs to 788 residues: Protein translocase subunit SecA 2 (788 aa).

ATP-binding positions include Gln86, 104 to 108 (GEGKT), and Asp493.

It belongs to the SecA family. As to quaternary structure, monomer and homodimer. Part of the essential Sec protein translocation apparatus which comprises SecA, SecYEG and auxiliary proteins SecDF. Other proteins may also be involved.

It localises to the cell membrane. The protein localises to the cytoplasm. It catalyses the reaction ATP + H2O + cellular proteinSide 1 = ADP + phosphate + cellular proteinSide 2.. Its function is as follows. Part of the Sec protein translocase complex. Interacts with the SecYEG preprotein conducting channel. Has a central role in coupling the hydrolysis of ATP to the transfer of proteins into and across the cell membrane, serving as an ATP-driven molecular motor driving the stepwise translocation of polypeptide chains across the membrane. The chain is Protein translocase subunit SecA 2 from Geobacillus thermodenitrificans (strain NG80-2).